The primary structure comprises 377 residues: Succinyl-diaminopimelate desuccinylase (377 aa).

Position 68 (His68) interacts with Zn(2+). Residue Asp70 is part of the active site. Residue Asp101 participates in Zn(2+) binding. Glu135 (proton acceptor) is an active-site residue. Zn(2+) is bound by residues Glu136, Glu164, and His350.

This sequence belongs to the peptidase M20A family. DapE subfamily. In terms of assembly, homodimer. It depends on Zn(2+) as a cofactor. Co(2+) is required as a cofactor.

It catalyses the reaction N-succinyl-(2S,6S)-2,6-diaminopimelate + H2O = (2S,6S)-2,6-diaminopimelate + succinate. The protein operates within amino-acid biosynthesis; L-lysine biosynthesis via DAP pathway; LL-2,6-diaminopimelate from (S)-tetrahydrodipicolinate (succinylase route): step 3/3. Catalyzes the hydrolysis of N-succinyl-L,L-diaminopimelic acid (SDAP), forming succinate and LL-2,6-diaminopimelate (DAP), an intermediate involved in the bacterial biosynthesis of lysine and meso-diaminopimelic acid, an essential component of bacterial cell walls. This Vibrio vulnificus (strain CMCP6) protein is Succinyl-diaminopimelate desuccinylase.